We begin with the raw amino-acid sequence, 185 residues long: Translation initiation factor IF-3 (185 aa).

The protein belongs to the IF-3 family. As to quaternary structure, monomer.

It is found in the cytoplasm. Its function is as follows. IF-3 binds to the 30S ribosomal subunit and shifts the equilibrium between 70S ribosomes and their 50S and 30S subunits in favor of the free subunits, thus enhancing the availability of 30S subunits on which protein synthesis initiation begins. The protein is Translation initiation factor IF-3 of Coxiella burnetii (strain RSA 493 / Nine Mile phase I).